Here is a 357-residue protein sequence, read N- to C-terminus: Carbamoyl phosphate synthase small chain (357 aa).

The CPSase stretch occupies residues 1-168 (MSKRLLILED…STATAYPSPN (168 aa)). Ser46, Gly220, and Gly222 together coordinate L-glutamine. The 186-residue stretch at 172–357 (KVVVVDFGLK…FMDLMDNFKK (186 aa)) folds into the Glutamine amidotransferase type-1 domain. Cys247 serves as the catalytic Nucleophile. Residues Leu248, Gln251, Asn289, Gly291, and Tyr292 each contribute to the L-glutamine site. Residues His331 and Asp333 contribute to the active site.

It belongs to the CarA family. In terms of assembly, composed of two chains; the small (or glutamine) chain promotes the hydrolysis of glutamine to ammonia, which is used by the large (or ammonia) chain to synthesize carbamoyl phosphate. Tetramer of heterodimers (alpha,beta)4.

The enzyme catalyses hydrogencarbonate + L-glutamine + 2 ATP + H2O = carbamoyl phosphate + L-glutamate + 2 ADP + phosphate + 2 H(+). It carries out the reaction L-glutamine + H2O = L-glutamate + NH4(+). It functions in the pathway amino-acid biosynthesis; L-arginine biosynthesis; carbamoyl phosphate from bicarbonate: step 1/1. The protein operates within pyrimidine metabolism; UMP biosynthesis via de novo pathway; (S)-dihydroorotate from bicarbonate: step 1/3. In terms of biological role, small subunit of the glutamine-dependent carbamoyl phosphate synthetase (CPSase). CPSase catalyzes the formation of carbamoyl phosphate from the ammonia moiety of glutamine, carbonate, and phosphate donated by ATP, constituting the first step of 2 biosynthetic pathways, one leading to arginine and/or urea and the other to pyrimidine nucleotides. The small subunit (glutamine amidotransferase) binds and cleaves glutamine to supply the large subunit with the substrate ammonia. This chain is Carbamoyl phosphate synthase small chain, found in Lactococcus lactis subsp. cremoris (strain MG1363).